A 418-amino-acid chain; its full sequence is Glutamyl-tRNA reductase (418 aa).

Residues Thr-49–Arg-52, Ser-109, Glu-114–Gln-116, and Gln-120 contribute to the substrate site. The active-site Nucleophile is the Cys-50. Gly-189–Ile-194 serves as a coordination point for NADP(+).

The protein belongs to the glutamyl-tRNA reductase family. As to quaternary structure, homodimer.

The enzyme catalyses (S)-4-amino-5-oxopentanoate + tRNA(Glu) + NADP(+) = L-glutamyl-tRNA(Glu) + NADPH + H(+). It functions in the pathway porphyrin-containing compound metabolism; protoporphyrin-IX biosynthesis; 5-aminolevulinate from L-glutamyl-tRNA(Glu): step 1/2. In terms of biological role, catalyzes the NADPH-dependent reduction of glutamyl-tRNA(Glu) to glutamate 1-semialdehyde (GSA). The polypeptide is Glutamyl-tRNA reductase (Escherichia coli O9:H4 (strain HS)).